The following is a 116-amino-acid chain: Somatostatin (116 aa).

Residues 1–24 (MLSCRLQCALAALSIVLALGGVTG) form the signal peptide. The propeptide occupies 25–88 (APSDPRLRQF…QDEMRLELQR (64 aa)). Ala-43 carries the alanine amide modification. A disulfide bridge links Cys-105 with Cys-116.

The protein belongs to the somatostatin family. In terms of processing, C-terminal amidation of the neuronostatin peptide is required for its biological activity, including for the regulation of mean arterial pressure.

It is found in the secreted. Inhibits the secretion of pituitary hormones, including that of growth hormone/somatotropin (GH1), PRL, ACTH, luteinizing hormone (LH) and TSH. Also impairs ghrelin- and GnRH-stimulated secretion of GH1 and LH; the inhibition of ghrelin-stimulated secretion of GH1 can be further increased by neuronostatin. Its function is as follows. May enhance low-glucose-induced glucagon release by pancreatic alpha cells. This effect may be mediated by binding to GPR107 and PKA activation. May regulate cardiac contractile function. May compromise cardiomyocyte viability. In the central nervous system, may impair memory retention and may affect hippocampal excitability. May also have anxiolytic and anorexigenic effects. May play a role in arterial pressure regulation. May inhibit basal, but not ghrelin- or GnRH-stimulated secretion of GH1 or LH, but does not affect the release of other pituitary hormones, including PRL, ACTH, FSH or TSH. Potentiates inhibitory action of somatostatin on ghrelin-stimulated secretion of GH1, but not that on GnRH-stimulated secretion of LH. In Bos taurus (Bovine), this protein is Somatostatin (SST).